A 306-amino-acid chain; its full sequence is D-alanine--D-alanine ligase (306 aa).

The ATP-grasp domain occupies 100-295 (KQIFRRAGLP…FGQLLERLME (196 aa)). Residue 127 to 180 (RLPYPLFVKSNTGGSSLRLGRARNRAELDDIMGQIFAAGEEVIMEPVLPGREVT) coordinates ATP. Residues aspartate 249, glutamate 262, and asparagine 264 each contribute to the Mg(2+) site.

This sequence belongs to the D-alanine--D-alanine ligase family. Mg(2+) is required as a cofactor. It depends on Mn(2+) as a cofactor.

The protein localises to the cytoplasm. The catalysed reaction is 2 D-alanine + ATP = D-alanyl-D-alanine + ADP + phosphate + H(+). It functions in the pathway cell wall biogenesis; peptidoglycan biosynthesis. Functionally, cell wall formation. The chain is D-alanine--D-alanine ligase from Desulfovibrio desulfuricans (strain ATCC 27774 / DSM 6949 / MB).